A 132-amino-acid chain; its full sequence is Fluoride-specific ion channel FluC (132 aa).

Helical transmembrane passes span 5–25, 32–52, 70–90, and 105–125; these read LYIALGGALGSVGRFALSGLV, TFPWGTLVVNVVGSFIIGFFA, FVMTGVLGGFTTFSSFSLQTL, and VVGSLVLCLVAVWLGHIAAVG. Na(+) is bound by residues Gly77 and Thr80.

Belongs to the fluoride channel Fluc/FEX (TC 1.A.43) family.

The protein localises to the cell inner membrane. The enzyme catalyses fluoride(in) = fluoride(out). Na(+) is not transported, but it plays an essential structural role and its presence is essential for fluoride channel function. Functionally, fluoride-specific ion channel. Important for reducing fluoride concentration in the cell, thus reducing its toxicity. This Opitutus terrae (strain DSM 11246 / JCM 15787 / PB90-1) protein is Fluoride-specific ion channel FluC.